A 366-amino-acid polypeptide reads, in one-letter code: Chorismate synthase (366 aa).

NADP(+) is bound by residues Arg48 and Arg54. FMN contacts are provided by residues 132 to 134 (RSS), 244 to 245 (NA), Gly289, 304 to 308 (KPTSS), and Arg330.

Belongs to the chorismate synthase family. Homotetramer. It depends on FMNH2 as a cofactor.

The catalysed reaction is 5-O-(1-carboxyvinyl)-3-phosphoshikimate = chorismate + phosphate. The protein operates within metabolic intermediate biosynthesis; chorismate biosynthesis; chorismate from D-erythrose 4-phosphate and phosphoenolpyruvate: step 7/7. Catalyzes the anti-1,4-elimination of the C-3 phosphate and the C-6 proR hydrogen from 5-enolpyruvylshikimate-3-phosphate (EPSP) to yield chorismate, which is the branch point compound that serves as the starting substrate for the three terminal pathways of aromatic amino acid biosynthesis. This reaction introduces a second double bond into the aromatic ring system. The sequence is that of Chorismate synthase from Methylorubrum extorquens (strain PA1) (Methylobacterium extorquens).